The sequence spans 596 residues: Elongation factor 4 (596 aa).

The 183-residue stretch at 2-184 folds into the tr-type G domain; the sequence is KQIRNFSIIA…VIVAKIPPPE (183 aa). Residues 14 to 19 and 131 to 134 contribute to the GTP site; these read DHGKST and NKID.

The protein belongs to the TRAFAC class translation factor GTPase superfamily. Classic translation factor GTPase family. LepA subfamily.

It localises to the cell inner membrane. It carries out the reaction GTP + H2O = GDP + phosphate + H(+). Its function is as follows. Required for accurate and efficient protein synthesis under certain stress conditions. May act as a fidelity factor of the translation reaction, by catalyzing a one-codon backward translocation of tRNAs on improperly translocated ribosomes. Back-translocation proceeds from a post-translocation (POST) complex to a pre-translocation (PRE) complex, thus giving elongation factor G a second chance to translocate the tRNAs correctly. Binds to ribosomes in a GTP-dependent manner. This Shewanella baltica (strain OS155 / ATCC BAA-1091) protein is Elongation factor 4.